The following is a 353-amino-acid chain: 3-isopropylmalate dehydrogenase (353 aa).

76–89 (GPKWDDPRAKVRPE) contributes to the NAD(+) binding site. Positions 96, 106, 134, and 223 each coordinate substrate. Mg(2+) contacts are provided by Asp-223, Asp-247, and Asp-251. 281-293 (GSAPDIAGKGIAN) is a binding site for NAD(+).

Belongs to the isocitrate and isopropylmalate dehydrogenases family. LeuB type 1 subfamily. Homodimer. It depends on Mg(2+) as a cofactor. The cofactor is Mn(2+).

The protein localises to the cytoplasm. The catalysed reaction is (2R,3S)-3-isopropylmalate + NAD(+) = 4-methyl-2-oxopentanoate + CO2 + NADH. It participates in amino-acid biosynthesis; L-leucine biosynthesis; L-leucine from 3-methyl-2-oxobutanoate: step 3/4. Its function is as follows. Catalyzes the oxidation of 3-carboxy-2-hydroxy-4-methylpentanoate (3-isopropylmalate) to 3-carboxy-4-methyl-2-oxopentanoate. The product decarboxylates to 4-methyl-2 oxopentanoate. The polypeptide is 3-isopropylmalate dehydrogenase (Anaeromyxobacter dehalogenans (strain 2CP-C)).